Reading from the N-terminus, the 59-residue chain is Large ribosomal subunit protein uL30 (59 aa).

It belongs to the universal ribosomal protein uL30 family. As to quaternary structure, part of the 50S ribosomal subunit.

The polypeptide is Large ribosomal subunit protein uL30 (Alteromonas mediterranea (strain DSM 17117 / CIP 110805 / LMG 28347 / Deep ecotype)).